The following is a 359-amino-acid chain: tRNA pseudouridine synthase B (359 aa).

The Nucleophile role is filled by Asp63.

Belongs to the pseudouridine synthase TruB family. Type 1 subfamily.

The enzyme catalyses uridine(55) in tRNA = pseudouridine(55) in tRNA. Responsible for synthesis of pseudouridine from uracil-55 in the psi GC loop of transfer RNAs. This Psychrobacter cryohalolentis (strain ATCC BAA-1226 / DSM 17306 / VKM B-2378 / K5) protein is tRNA pseudouridine synthase B.